The primary structure comprises 303 residues: Probable cat1 operon transcriptional activator (303 aa).

One can recognise an HTH lysR-type domain in the interval 1–58; that stretch reads MDLRQFRYFVAVARERNFTRAARQLNIAQPPLSRQIQLLEEEVGVPLLIRNSRPVQLT. The H-T-H motif DNA-binding region spans 18-37; it reads FTRAARQLNIAQPPLSRQIQ.

Belongs to the LysR transcriptional regulatory family.

Its function is as follows. Probable positive regulator of the cat1 operon which encode enzymes responsible for the degradation of catechol to acetyl-CoA via the beta-ketoadipate pathway. The chain is Probable cat1 operon transcriptional activator from Acinetobacter lwoffii.